The chain runs to 378 residues: Succinyl-diaminopimelate desuccinylase (378 aa).

His-66 contributes to the Zn(2+) binding site. Asp-68 is an active-site residue. Asp-100 is a Zn(2+) binding site. Residue Glu-134 is the Proton acceptor of the active site. 3 residues coordinate Zn(2+): Glu-135, Glu-163, and His-350.

It belongs to the peptidase M20A family. DapE subfamily. As to quaternary structure, homodimer. Zn(2+) serves as cofactor. It depends on Co(2+) as a cofactor.

It carries out the reaction N-succinyl-(2S,6S)-2,6-diaminopimelate + H2O = (2S,6S)-2,6-diaminopimelate + succinate. It participates in amino-acid biosynthesis; L-lysine biosynthesis via DAP pathway; LL-2,6-diaminopimelate from (S)-tetrahydrodipicolinate (succinylase route): step 3/3. Functionally, catalyzes the hydrolysis of N-succinyl-L,L-diaminopimelic acid (SDAP), forming succinate and LL-2,6-diaminopimelate (DAP), an intermediate involved in the bacterial biosynthesis of lysine and meso-diaminopimelic acid, an essential component of bacterial cell walls. The sequence is that of Succinyl-diaminopimelate desuccinylase from Hydrogenovibrio crunogenus (strain DSM 25203 / XCL-2) (Thiomicrospira crunogena).